The chain runs to 110 residues: UPF0122 protein BCAH187_A3894 (110 aa).

The protein belongs to the UPF0122 family.

Might take part in the signal recognition particle (SRP) pathway. This is inferred from the conservation of its genetic proximity to ftsY/ffh. May be a regulatory protein. The protein is UPF0122 protein BCAH187_A3894 of Bacillus cereus (strain AH187).